The primary structure comprises 49 residues: Large ribosomal subunit protein bL33 (49 aa).

This sequence belongs to the bacterial ribosomal protein bL33 family.

This chain is Large ribosomal subunit protein bL33, found in Lachnoclostridium phytofermentans (strain ATCC 700394 / DSM 18823 / ISDg) (Clostridium phytofermentans).